A 156-amino-acid chain; its full sequence is Endoribonuclease YbeY (156 aa).

Positions 122, 126, and 132 each coordinate Zn(2+).

The protein belongs to the endoribonuclease YbeY family. Zn(2+) is required as a cofactor.

Its subcellular location is the cytoplasm. Single strand-specific metallo-endoribonuclease involved in late-stage 70S ribosome quality control and in maturation of the 3' terminus of the 16S rRNA. The protein is Endoribonuclease YbeY of Syntrophomonas wolfei subsp. wolfei (strain DSM 2245B / Goettingen).